The following is a 452-amino-acid chain: tRNA modification GTPase MnmE (452 aa).

Positions 24, 81, and 120 each coordinate (6S)-5-formyl-5,6,7,8-tetrahydrofolate. Residues 217–373 form the TrmE-type G domain; that stretch reads GIKTAIVGKT…LIMKIEQMHI (157 aa). Asn227 lines the K(+) pocket. GTP is bound by residues 227–232, 246–252, and 271–274; these read NVGKSS, TDIHGTT, and DTAG. Ser231 is a binding site for Mg(2+). Thr246, Ile248, and Thr251 together coordinate K(+). Position 252 (Thr252) interacts with Mg(2+). Lys452 lines the (6S)-5-formyl-5,6,7,8-tetrahydrofolate pocket.

It belongs to the TRAFAC class TrmE-Era-EngA-EngB-Septin-like GTPase superfamily. TrmE GTPase family. As to quaternary structure, homodimer. Heterotetramer of two MnmE and two MnmG subunits. K(+) is required as a cofactor.

It is found in the cytoplasm. In terms of biological role, exhibits a very high intrinsic GTPase hydrolysis rate. Involved in the addition of a carboxymethylaminomethyl (cmnm) group at the wobble position (U34) of certain tRNAs, forming tRNA-cmnm(5)s(2)U34. This Mesoplasma florum (strain ATCC 33453 / NBRC 100688 / NCTC 11704 / L1) (Acholeplasma florum) protein is tRNA modification GTPase MnmE.